The primary structure comprises 123 residues: MPRATLPPEARLHRPSEFAAALKGRRLARGAFFILSAAPSSPPPGQAAQARLGMVIAKRYAAHASTRNALKRVIREAFRHCRLELPPQDYVLRLHSKPAPATLTSLKRLARAEVDAHFARVRP.

It belongs to the RnpA family. As to quaternary structure, consists of a catalytic RNA component (M1 or rnpB) and a protein subunit.

It catalyses the reaction Endonucleolytic cleavage of RNA, removing 5'-extranucleotides from tRNA precursor.. RNaseP catalyzes the removal of the 5'-leader sequence from pre-tRNA to produce the mature 5'-terminus. It can also cleave other RNA substrates such as 4.5S RNA. The protein component plays an auxiliary but essential role in vivo by binding to the 5'-leader sequence and broadening the substrate specificity of the ribozyme. The protein is Ribonuclease P protein component of Bordetella petrii (strain ATCC BAA-461 / DSM 12804 / CCUG 43448).